We begin with the raw amino-acid sequence, 148 residues long: Translation initiation factor 2 subunit beta (148 aa).

It belongs to the eIF-2-beta/eIF-5 family. As to quaternary structure, heterotrimer composed of an alpha, a beta and a gamma chain.

Functionally, eIF-2 functions in the early steps of protein synthesis by forming a ternary complex with GTP and initiator tRNA. This Aeropyrum pernix (strain ATCC 700893 / DSM 11879 / JCM 9820 / NBRC 100138 / K1) protein is Translation initiation factor 2 subunit beta (eif2b).